Here is a 213-residue protein sequence, read N- to C-terminus: Glutathione S-transferase DHAR1, mitochondrial (213 aa).

Residues Lys8 and Asp19 each coordinate glutathione. L-ascorbate is bound by residues Lys8 and Asp19. The GST N-terminal domain maps to 10–83 (AVGAPDHLGD…DVIVGILEEK (74 aa)). The active-site Nucleophile is Cys20. Cys20 is modified (S-glutathionyl cysteine). Residues 20 to 25 (CPFSQR) carry the Glutathione-binding motif. Glutathione-binding residues include Lys47, Val60, and Ser73. Residues 84-213 (YPDPPLKTPA…ISGWAPKVNP (130 aa)) enclose the GST C-terminal domain. The Copper-binding signature appears at 133-137 (HLKSH). His160 and Trp207 together coordinate glutathione. An L-ascorbate-binding site is contributed by Lys210.

This sequence belongs to the GST superfamily. DHAR family. Monomer. Interacts with copper (Cu). In terms of processing, spontaneous S-glutathionylation in the presence of oxidized glutathione (GSSG). Expressed at least in roots and leaves.

The protein localises to the mitochondrion. Its subcellular location is the cytoplasm. It localises to the cytosol. It is found in the peroxisome. The protein resides in the membrane. It carries out the reaction RX + glutathione = an S-substituted glutathione + a halide anion + H(+). It catalyses the reaction L-dehydroascorbate + 2 glutathione = glutathione disulfide + L-ascorbate. Functionally, displays a dual function. As a soluble protein, exhibits glutathione-dependent thiol transferase and dehydroascorbate (DHA) reductase activities. Key component of the ascorbate recycling system. Involved in the redox homeostasis, especially in scavenging of ROS under oxidative stresses, subsequently to biotic or abiotic inducers. As a peripheral membrane protein, could also function as voltage-gated ion channel. This chain is Glutathione S-transferase DHAR1, mitochondrial, found in Arabidopsis thaliana (Mouse-ear cress).